The chain runs to 1493 residues: Mediator of RNA polymerase II transcription subunit 14 (1493 aa).

Disordered stretches follow at residues 1-51 (MPSS…YHAA), 71-110 (MIGVPPAATPNLSLAQSRPPDSKQSSDADGHPVFLSSAKG), 408-427 (TEQGTDVQIAPEKPTDAPTV), 674-693 (QRPRTAKSKPNPKPEQRSAS), 894-913 (EAGTKRKAPPGVQGETNDVD), and 957-997 (GSNT…SSDD). Over residues 90-100 (PDSKQSSDADG) the composition is skewed to basic and acidic residues.

The protein belongs to the Mediator complex subunit 14 family. As to quaternary structure, component of the Mediator complex.

It localises to the nucleus. Functionally, component of the Mediator complex, a coactivator involved in the regulated transcription of nearly all RNA polymerase II-dependent genes. Mediator functions as a bridge to convey information from gene-specific regulatory proteins to the basal RNA polymerase II transcription machinery. Mediator is recruited to promoters by direct interactions with regulatory proteins and serves as a scaffold for the assembly of a functional preinitiation complex with RNA polymerase II and the general transcription factors. This Mycosarcoma maydis (Corn smut fungus) protein is Mediator of RNA polymerase II transcription subunit 14 (RGR1).